A 147-amino-acid chain; its full sequence is 3-dehydroquinate dehydratase (147 aa).

Tyrosine 26 (proton acceptor) is an active-site residue. The substrate site is built by asparagine 77, histidine 83, and aspartate 90. Histidine 103 serves as the catalytic Proton donor. Residues 104-105 and arginine 114 contribute to the substrate site; that span reads LS.

This sequence belongs to the type-II 3-dehydroquinase family. As to quaternary structure, homododecamer.

The catalysed reaction is 3-dehydroquinate = 3-dehydroshikimate + H2O. It functions in the pathway metabolic intermediate biosynthesis; chorismate biosynthesis; chorismate from D-erythrose 4-phosphate and phosphoenolpyruvate: step 3/7. Functionally, catalyzes a trans-dehydration via an enolate intermediate. The sequence is that of 3-dehydroquinate dehydratase from Proteus mirabilis (strain HI4320).